A 358-amino-acid polypeptide reads, in one-letter code: MQEWFQNLFAATLGLGDLGITVGLVVSVIVKIVIILIPLILTVAYLTYFERKVIGFMQLRVGPNVTGPWGLIQPFADVFKLLFKEVTRPKLSNKALFYIGPIMSLAPSFAAWAVIPFNEEWVLTNINIGLLYILMITSLSVYGVIIAGWASNSKYSFLGAMRASAQSISYEIAMSAALVCVVMVSGSMNFSDIVAAQAKGIAGGSVFSWNWLPLFPIFIVYLISAVAETNRAPFDVAEGESEIVAGHHVEYSGFAFALFFLAEYIFMILIAALTSLMFLGGWLSPFPQSWGIVGTPSAFWMFAKMAAVLYWYLWIRATFPRYRYDQIMRLGWKVLIPIGFAYIVILGVWMISPLNLWK.

The next 8 helical transmembrane spans lie at 20–40 (ITVG…IPLI), 95–115 (ALFY…WAVI), 128–148 (IGLL…IIAG), 168–188 (ISYE…SGSM), 206–226 (VFSW…ISAV), 253–273 (GFAF…IAAL), 295–315 (TPSA…YLWI), and 334–354 (VLIP…ISPL).

This sequence belongs to the complex I subunit 1 family. As to quaternary structure, NDH-1 is composed of 14 different subunits. Subunits NuoA, H, J, K, L, M, N constitute the membrane sector of the complex.

The protein localises to the cell inner membrane. The enzyme catalyses a quinone + NADH + 5 H(+)(in) = a quinol + NAD(+) + 4 H(+)(out). NDH-1 shuttles electrons from NADH, via FMN and iron-sulfur (Fe-S) centers, to quinones in the respiratory chain. The immediate electron acceptor for the enzyme in this species is believed to be ubiquinone. Couples the redox reaction to proton translocation (for every two electrons transferred, four hydrogen ions are translocated across the cytoplasmic membrane), and thus conserves the redox energy in a proton gradient. This subunit may bind ubiquinone. The sequence is that of NADH-quinone oxidoreductase subunit H from Neisseria meningitidis serogroup B (strain ATCC BAA-335 / MC58).